Here is a 484-residue protein sequence, read N- to C-terminus: tRNA-2-methylthio-N(6)-dimethylallyladenosine synthase (484 aa).

The 118-residue stretch at 36–153 (GKLYIKTHGC…LPELIRARRE (118 aa)) folds into the MTTase N-terminal domain. [4Fe-4S] cluster-binding residues include Cys-45, Cys-82, Cys-116, Cys-190, Cys-194, and Cys-197. Residues 176-415 (RAEGPSAFVS…HINAHAASIS (240 aa)) form the Radical SAM core domain. The 64-residue stretch at 416–479 (QSMVGSVQRV…SNSLRGRIQL (64 aa)) folds into the TRAM domain. A disordered region spans residues 428-450 (EGPSRRDPNELTGKSENMRPVNF).

The protein belongs to the methylthiotransferase family. MiaB subfamily. As to quaternary structure, monomer. [4Fe-4S] cluster is required as a cofactor.

The protein resides in the cytoplasm. It catalyses the reaction N(6)-dimethylallyladenosine(37) in tRNA + (sulfur carrier)-SH + AH2 + 2 S-adenosyl-L-methionine = 2-methylsulfanyl-N(6)-dimethylallyladenosine(37) in tRNA + (sulfur carrier)-H + 5'-deoxyadenosine + L-methionine + A + S-adenosyl-L-homocysteine + 2 H(+). Catalyzes the methylthiolation of N6-(dimethylallyl)adenosine (i(6)A), leading to the formation of 2-methylthio-N6-(dimethylallyl)adenosine (ms(2)i(6)A) at position 37 in tRNAs that read codons beginning with uridine. This chain is tRNA-2-methylthio-N(6)-dimethylallyladenosine synthase, found in Xanthomonas axonopodis pv. citri (strain 306).